We begin with the raw amino-acid sequence, 195 residues long: Transcription factor 15 (195 aa).

Residues 44–65 form a disordered region; sequence LEAARRGPGPGSGRRASNGAGP. Over residues 56–65 the composition is skewed to low complexity; it reads GRRASNGAGP. S60 carries the phosphoserine modification. In terms of domain architecture, bHLH spans 70 to 122; it reads RQRQAANARERDRTQSVNTAFTALRTLIPTEPVDRKLSKIETLRLASSYIAHL.

Heterodimer; efficient DNA binding requires dimerization with another bHLH protein, such as TCF3/E12. Interacts with MEOX2. Expressed in heart and skeletal muscle. Specifically expressed in a subpopulation of embryonic stem cells (ESCs), that are still undifferentiated but primed for ifferentiation. Expressed in hematopoietic stem cells (HSCs).

It localises to the nucleus. Its function is as follows. Early transcription factor that plays a key role in somitogenesis, paraxial mesoderm development and regulation of stem cell pluripotency. Essential for the mesenchymal to epithelial transition associated with somite formation. Required for somite morphogenesis, thereby regulating patterning of the axial skeleton and skeletal muscles. Required for proper localization of somite epithelium markers during the mesenchymal to epithelial transition. Also plays a key role in regulation of stem cell pluripotency. Promotes pluripotency exit of embryonic stem cells (ESCs) by priming ESCs for differentiation. Acts as a key regulator of self-renewal of hematopoietic stem cells (HSCs) by mediating HSCs quiescence and long-term self-renewal. Together with MEOX2, regulates transcription in heart endothelial cells to regulate fatty acid transport across heart endothelial cells. Acts by forming a heterodimer with another helix-loop-helix (bHLH) protein, such as TCF3/E12, that binds DNA on E-box motifs (5'-CANNTG-3') and activates transcription of target genes. The chain is Transcription factor 15 from Mus musculus (Mouse).